Consider the following 309-residue polypeptide: MTRVKSKLDEELSSPWFYTVCTMGGMLSAGTTHLAITPLDVLKVNMQVNPVKYNSIPSGFSTLLREHGHSYLWRGWSGKLLGYGVQGGCRFGLYEYFKTLYSDVLPNHNRTSIYFLSSASAQIFADMALCPFEAIKVRVQTQPMFAKGLLDGFPRVYRSEGLAGFHRGLFPLWCRNLPFSMVMFSTFEQSVEFIYQKIIQKRKQDCSKAQQLGVTCLAGYTAGAVGTIISNPADVVLSSLYNNKAKNVLQAVRNIGFVGLFTRSLPVRITIVGPVITLQWFFYDAIKVLSGFPTSGGVKKPVDAAKLSV.

The Mitochondrial intermembrane portion of the chain corresponds to 1–15 (MTRVKSKLDEELSSP). The helical transmembrane segment at 16–36 (WFYTVCTMGGMLSAGTTHLAI) threads the bilayer. 3 Solcar repeats span residues 16–100 (WFYT…FKTL), 109–193 (NRTS…SVEF), and 210–289 (QQLG…IKVL). The Mitochondrial matrix portion of the chain corresponds to 37–74 (TPLDVLKVNMQVNPVKYNSIPSGFSTLLREHGHSYLWR). Residues 75–94 (GWSGKLLGYGVQGGCRFGLY) traverse the membrane as a helical segment. Over 95–111 (EYFKTLYSDVLPNHNRT) the chain is Mitochondrial intermembrane. Residues 112–132 (SIYFLSSASAQIFADMALCPF) traverse the membrane as a helical segment. Residues 133–167 (EAIKVRVQTQPMFAKGLLDGFPRVYRSEGLAGFHR) are Mitochondrial matrix-facing. A helical transmembrane segment spans residues 168-187 (GLFPLWCRNLPFSMVMFSTF). Residues 188–208 (EQSVEFIYQKIIQKRKQDCSK) lie on the Mitochondrial intermembrane side of the membrane. The helical transmembrane segment at 209-229 (AQQLGVTCLAGYTAGAVGTII) threads the bilayer. Topologically, residues 230-268 (SNPADVVLSSLYNNKAKNVLQAVRNIGFVGLFTRSLPVR) are mitochondrial matrix. A helical transmembrane segment spans residues 269–289 (ITIVGPVITLQWFFYDAIKVL). Topologically, residues 290–309 (SGFPTSGGVKKPVDAAKLSV) are mitochondrial intermembrane.

This sequence belongs to the mitochondrial carrier (TC 2.A.29) family. In terms of tissue distribution, expressed in stems, leaves and flowers. Strong expression in the stamens of flowers.

The protein resides in the mitochondrion inner membrane. Transport of phosphate groups from the cytosol to the mitochondrial matrix. Mediates salt stress tolerance through an ATP-dependent pathway and via modulation of the gibberellin metabolism. The polypeptide is Mitochondrial phosphate carrier protein 1, mitochondrial (MPT1) (Arabidopsis thaliana (Mouse-ear cress)).